We begin with the raw amino-acid sequence, 308 residues long: uncharacterized protein (308 aa).

The segment at 158–221 (GDSNAETFEE…DSINHGESSE (64 aa)) is disordered. Basic and acidic residues predominate over residues 206 to 221 (RNGDRSDSINHGESSE).

This is an uncharacterized protein from Arabidopsis thaliana (Mouse-ear cress).